The sequence spans 749 residues: MGRVVGIDLGTTNSVIAVMEGGKPMVIANAEGVRTTPSVVGVSKTGERLVGELARRQLVLNPRNTFANIKRFIGRRYDELTDESKRVPYTVRRDPEGNVRIVCPQLSREFAPEEVAAMILRKLAEEASRYLGEPVTGAVITVPAYFNDSQRQATRDAGRIAGLEVKRILNEPTAASLAYGLDRRDNQTILVFDLGGGTFDVSVLKVGNGVFEVKATSGDTQLGGNDFDRRIVDWLAEQFLEAEGIDLRRDRQALQRLIEAAEKAKIELSGVSVTDINLPFITATEDEPKHLETRLTRSEFEALCEDLLERMMRPLRRALKDARLQPQDIDEVVLVGGSTRMPMVQQLVRSLIGREPNQNVNPDEVVAIGAAIQAGILAGEVKDILLLDVTPLSLGLETIGGVMKKLIPRNTAIPVRRSDIFSTAENNQTMVEIHILQGERQLAEGNKSLGRFKLTGIPPAPRGVPQVQVSFDIDANGILQVSALDKTTGREQTVTIQGASTLSQEEVKRMMKDAELYAQQDRQLKARIEKRNRAQTLIAQSERRLREISLDFGLYFAESKRRRIESTIRELKDYLERQDDRGLDLALAELQDALFDLNQETAARLRDEEGEGFFEPLKQTFASLRGDGNRDFERSWDDRGGDRWDADPWDRSRRSTPSYGYDDRRSPVSDPYRGERWVEEQTSMSRREPVRDRNGGNGSVRPEPAPRRGRPTWEEDQPPRRDRSSQPPAKPASGRRWNDGWDDDDDEWF.

Threonine 198 carries the post-translational modification Phosphothreonine; by autocatalysis. Composition is skewed to basic and acidic residues over residues 643–653, 661–694, and 711–724; these read RWDADPWDRSR, YDDR…RDRN, and PTWE…RDRS. Residues 643 to 749 are disordered; that stretch reads RWDADPWDRS…GWDDDDDEWF (107 aa). The segment covering 740–749 has biased composition (acidic residues); that stretch reads GWDDDDDEWF.

Belongs to the heat shock protein 70 family.

Functionally, acts as a chaperone. The sequence is that of Chaperone protein dnaK3 (dnaK3) from Synechococcus elongatus (strain ATCC 33912 / PCC 7942 / FACHB-805) (Anacystis nidulans R2).